Here is a 110-residue protein sequence, read N- to C-terminus: Ig kappa chain V region 2717 (110 aa).

The tract at residues 1–23 is framework-1; it reads VEVLTQTPSPVSAAVGGTVTISC. The tract at residues 24–36 is complementarity-determining-1; sequence QSTKSIYBBBYLA. The interval 37-51 is framework-2; the sequence is WYQZKPGQPPKALIY. Residues 52-58 are complementarity-determining-2; the sequence is TASSLAS. The framework-3 stretch occupies residues 59–90; sequence GVPSRFTGSGSGTZFTLTLSDVZCDDAATYYC. The interval 91 to 99 is complementarity-determining-3; the sequence is GGADYTGYS. A framework-4 region spans residues 100-109; the sequence is FGGGTEVVVK.

In Oryctolagus cuniculus (Rabbit), this protein is Ig kappa chain V region 2717.